Reading from the N-terminus, the 259-residue chain is LOB domain-containing protein CRL1 (259 aa).

The 103-residue stretch at 6-108 (SPCGACKFLR…AQLASLKAAA (103 aa)) folds into the LOB domain.

The protein belongs to the LOB domain-containing protein family. In terms of assembly, can form homodimers. As to expression, expressed in unelongating basal internodes, at the base of shoot in parenchyma cells adjacent to the peripheral vascular cylinder of the stem, and root pericycle cells. Expressed in lateral and adventitious root primordia, tiller primordia, vascular tissues, scutellum, and young pedicels.

The protein resides in the nucleus. In terms of biological role, acts as a positive regulator of adventitious (crown) root formation by promoting its initiation. Acts as a positive regulator of lateral root formation. Regulated by the auxin response factor and transcriptional activator ARF23/ARF1. Involved in auxin-mediated cell dedifferentiation, and may promote the initial cell division in the pericycle cells adjacent to the peripheral vascular cylinder at the base of the stem. May act upstream of the gene regulatory network controlling adventitious root (crown) development. This chain is LOB domain-containing protein CRL1, found in Oryza sativa subsp. japonica (Rice).